Reading from the N-terminus, the 119-residue chain is Protein TusC (119 aa).

The protein belongs to the DsrF/TusC family. In terms of assembly, heterohexamer, formed by a dimer of trimers. The hexameric TusBCD complex contains 2 copies each of TusB, TusC and TusD. The TusBCD complex interacts with TusE.

It is found in the cytoplasm. In terms of biological role, part of a sulfur-relay system required for 2-thiolation of 5-methylaminomethyl-2-thiouridine (mnm(5)s(2)U) at tRNA wobble positions. This chain is Protein TusC, found in Escherichia coli O8 (strain IAI1).